A 114-amino-acid chain; its full sequence is uncharacterized protein (114 aa).

In terms of domain architecture, HTH arsR-type spans 2 to 97 (ESEPLYKLKA…VARKVLARVL (96 aa)). Positions 37-60 (GELLSSDVGLESSNLSQQLGVLRR) form a DNA-binding region, H-T-H motif.

This is an uncharacterized protein from Mycobacterium tuberculosis (strain CDC 1551 / Oshkosh).